The primary structure comprises 485 residues: NADH-quinone oxidoreductase subunit N (485 aa).

The next 14 membrane-spanning stretches (helical) occupy residues 8–28, 35–55, 71–91, 105–125, 127–147, 159–179, 203–223, 235–255, 271–291, 297–317, 326–346, 373–393, 408–430, and 455–475; these read LIALLPLLIVGLTVVVVMLSI, FLNATLSVIGLNAALVSLWFV, GFAMLYTGLVLLASLATCTFA, FYLLVLIAALGGILLANANHL, SLFLGIELISLPLFGLVGYAF, YTILSAAASSFLLFGMALVYA, LLAGFGMMIVGLGFKLSLVPF, PAPVSTFLATASKIAIFGVVM, VVLAIIAFASIIFGNLMALSQ, LLGYSSISHLGYLLVALIALQ, VGVYLAGYLFSSLGAFGVVSL, AAVMTVMMLSLAGIPMTLGFI, WWLVGAVVVGSAIGLYYYLRVAV, and IVVLISALLVLVLGVWPQPLI.

It belongs to the complex I subunit 2 family. As to quaternary structure, NDH-1 is composed of 13 different subunits. Subunits NuoA, H, J, K, L, M, N constitute the membrane sector of the complex.

It is found in the cell inner membrane. The catalysed reaction is a quinone + NADH + 5 H(+)(in) = a quinol + NAD(+) + 4 H(+)(out). In terms of biological role, NDH-1 shuttles electrons from NADH, via FMN and iron-sulfur (Fe-S) centers, to quinones in the respiratory chain. The immediate electron acceptor for the enzyme in this species is believed to be ubiquinone. Couples the redox reaction to proton translocation (for every two electrons transferred, four hydrogen ions are translocated across the cytoplasmic membrane), and thus conserves the redox energy in a proton gradient. In Shigella flexneri, this protein is NADH-quinone oxidoreductase subunit N.